The primary structure comprises 243 residues: MNLVIDGGNTFIKTAVFQNNRLLEKQVFLKKDFFENFENLQKKFPAIRKSILSSVTSLDSDLENALKKSYSLLQLDDLVALPFKNEYATPHTLGKDRIALVAAAVNTYPGKNVLIIDAGTCITYDLKTEDEVYLGGAISPGLEMRFKSLHKFTANLPLVTPKPAPKLIGDSTESSILSGIINGIEMELKGTIKSYDSKFEDLTIIFTGGDSQILSIPLKNSIFANSNFLLEGLNFILEFNKTQ.

Position 6-13 (6-13 (DGGNTFIK)) interacts with ATP. Substrate contacts are provided by residues Tyr-87 and 94–97 (GKDR). Asp-96 (proton acceptor) is an active-site residue. Asp-117 provides a ligand contact to K(+). Thr-120 is a binding site for ATP. Thr-172 is a binding site for substrate.

Belongs to the type III pantothenate kinase family. In terms of assembly, homodimer. The cofactor is NH4(+). K(+) is required as a cofactor.

The protein resides in the cytoplasm. It carries out the reaction (R)-pantothenate + ATP = (R)-4'-phosphopantothenate + ADP + H(+). Its pathway is cofactor biosynthesis; coenzyme A biosynthesis; CoA from (R)-pantothenate: step 1/5. Catalyzes the phosphorylation of pantothenate (Pan), the first step in CoA biosynthesis. The sequence is that of Type III pantothenate kinase from Christiangramia forsetii (strain DSM 17595 / CGMCC 1.15422 / KT0803) (Gramella forsetii).